Consider the following 329-residue polypeptide: tRNA-modifying protein YgfZ (329 aa).

W28 and W188 together coordinate folate.

This sequence belongs to the tRNA-modifying YgfZ family.

It is found in the cytoplasm. In terms of biological role, folate-binding protein involved in regulating the level of ATP-DnaA and in the modification of some tRNAs. It is probably a key factor in regulatory networks that act via tRNA modification, such as initiation of chromosomal replication. This Photorhabdus laumondii subsp. laumondii (strain DSM 15139 / CIP 105565 / TT01) (Photorhabdus luminescens subsp. laumondii) protein is tRNA-modifying protein YgfZ.